The following is a 665-amino-acid chain: DNA ligase (665 aa).

NAD(+) contacts are provided by residues D32–D36, S81–L82, and E110. Catalysis depends on K112, which acts as the N6-AMP-lysine intermediate. R133, E167, K283, and K307 together coordinate NAD(+). The Zn(2+) site is built by C401, C404, C419, and C424. A BRCT domain is found at E586 to I665.

It belongs to the NAD-dependent DNA ligase family. LigA subfamily. Mg(2+) serves as cofactor. Mn(2+) is required as a cofactor.

It catalyses the reaction NAD(+) + (deoxyribonucleotide)n-3'-hydroxyl + 5'-phospho-(deoxyribonucleotide)m = (deoxyribonucleotide)n+m + AMP + beta-nicotinamide D-nucleotide.. In terms of biological role, DNA ligase that catalyzes the formation of phosphodiester linkages between 5'-phosphoryl and 3'-hydroxyl groups in double-stranded DNA using NAD as a coenzyme and as the energy source for the reaction. It is essential for DNA replication and repair of damaged DNA. This Staphylococcus epidermidis (strain ATCC 12228 / FDA PCI 1200) protein is DNA ligase.